Here is a 439-residue protein sequence, read N- to C-terminus: Xylose isomerase (439 aa).

Catalysis depends on residues His-101 and Asp-104. The Mg(2+) site is built by Glu-232, Glu-268, His-271, Asp-296, Asp-307, Asp-309, and Asp-339.

The protein belongs to the xylose isomerase family. As to quaternary structure, homotetramer. Requires Mg(2+) as cofactor.

The protein localises to the cytoplasm. It catalyses the reaction alpha-D-xylose = alpha-D-xylulofuranose. The protein is Xylose isomerase (xylA) of Thermoanaerobacterium saccharolyticum.